The sequence spans 487 residues: Cysteine--tRNA ligase (487 aa).

Residue cysteine 27 participates in Zn(2+) binding. The short motif at 29-39 is the 'HIGH' region element; sequence VTVYDLCHIGH. Positions 211, 236, and 240 each coordinate Zn(2+). Positions 268 to 272 match the 'KMSKS' region motif; sequence KMSKS. Lysine 271 is an ATP binding site.

The protein belongs to the class-I aminoacyl-tRNA synthetase family. Monomer. It depends on Zn(2+) as a cofactor.

The protein localises to the cytoplasm. The enzyme catalyses tRNA(Cys) + L-cysteine + ATP = L-cysteinyl-tRNA(Cys) + AMP + diphosphate. This is Cysteine--tRNA ligase from Thermodesulfovibrio yellowstonii (strain ATCC 51303 / DSM 11347 / YP87).